The chain runs to 177 residues: Adenine phosphoribosyltransferase (177 aa).

The protein belongs to the purine/pyrimidine phosphoribosyltransferase family. Homodimer.

It is found in the cytoplasm. It catalyses the reaction AMP + diphosphate = 5-phospho-alpha-D-ribose 1-diphosphate + adenine. The protein operates within purine metabolism; AMP biosynthesis via salvage pathway; AMP from adenine: step 1/1. Catalyzes a salvage reaction resulting in the formation of AMP, that is energically less costly than de novo synthesis. This is Adenine phosphoribosyltransferase from Chlorobium phaeovibrioides (strain DSM 265 / 1930) (Prosthecochloris vibrioformis (strain DSM 265)).